The chain runs to 609 residues: UvrABC system protein C (609 aa).

The GIY-YIG domain occupies 16 to 94 (SSPGVYRMYD…IKQYMPKYNV (79 aa)). Positions 203–238 (QQVMSVLVQKMEQASSDMRYEQAALYRDQITALRRV) constitute a UVR domain.

The protein belongs to the UvrC family. Interacts with UvrB in an incision complex.

It localises to the cytoplasm. Its function is as follows. The UvrABC repair system catalyzes the recognition and processing of DNA lesions. UvrC both incises the 5' and 3' sides of the lesion. The N-terminal half is responsible for the 3' incision and the C-terminal half is responsible for the 5' incision. This is UvrABC system protein C from Shewanella pealeana (strain ATCC 700345 / ANG-SQ1).